The chain runs to 159 residues: Small ribosomal subunit protein bS6 (159 aa).

Residues 93–151 show a composition bias toward basic and acidic residues; it reads VDEHEEGPSAMMRKADRDRERDDRGPREGGFRGDREGRGDREGGGFRGDRGPRRPREDA. Positions 93–159 are disordered; sequence VDEHEEGPSA…DADTAAASEE (67 aa).

The protein belongs to the bacterial ribosomal protein bS6 family.

In terms of biological role, binds together with bS18 to 16S ribosomal RNA. This Rhodopseudomonas palustris (strain HaA2) protein is Small ribosomal subunit protein bS6.